The primary structure comprises 80 residues: Keratin-associated protein 6-1 (80 aa).

This sequence belongs to the KRTAP type 6 family. In terms of assembly, interacts with hair keratins.

In the hair cortex, hair keratin intermediate filaments are embedded in an interfilamentous matrix, consisting of hair keratin-associated proteins (KRTAP), which are essential for the formation of a rigid and resistant hair shaft through their extensive disulfide bond cross-linking with abundant cysteine residues of hair keratins. The matrix proteins include the high-sulfur and high-glycine-tyrosine keratins. The chain is Keratin-associated protein 6-1 (KRTAP6-1) from Oryctolagus cuniculus (Rabbit).